We begin with the raw amino-acid sequence, 66 residues long: Small ribosomal subunit protein bS21B (66 aa).

Residues 38–66 (YVKPTQKRKIAKKAAISKAKKEARRSYSY) form a disordered region.

The protein belongs to the bacterial ribosomal protein bS21 family.

The protein is Small ribosomal subunit protein bS21B of Francisella tularensis subsp. tularensis (strain SCHU S4 / Schu 4).